The chain runs to 174 residues: Methylated-DNA--protein-cysteine methyltransferase (174 aa).

Cysteine 141 (nucleophile; methyl group acceptor) is an active-site residue.

It belongs to the MGMT family.

The protein resides in the cytoplasm. The catalysed reaction is a 6-O-methyl-2'-deoxyguanosine in DNA + L-cysteinyl-[protein] = S-methyl-L-cysteinyl-[protein] + a 2'-deoxyguanosine in DNA. The enzyme catalyses a 4-O-methyl-thymidine in DNA + L-cysteinyl-[protein] = a thymidine in DNA + S-methyl-L-cysteinyl-[protein]. Involved in the cellular defense against the biological effects of O6-methylguanine (O6-MeG) and O4-methylthymine (O4-MeT) in DNA. Repairs the methylated nucleobase in DNA by stoichiometrically transferring the methyl group to a cysteine residue in the enzyme. This is a suicide reaction: the enzyme is irreversibly inactivated. This chain is Methylated-DNA--protein-cysteine methyltransferase, found in Thermococcus kodakarensis (strain ATCC BAA-918 / JCM 12380 / KOD1) (Pyrococcus kodakaraensis (strain KOD1)).